Here is an 83-residue protein sequence, read N- to C-terminus: MAENVPADVNTLSFELAIEELETIVKRLEDGKVALEESVAIYERGEALKRRCEELLRRAEARVEKITTDASGHVTGTEPLDVR.

It belongs to the XseB family. As to quaternary structure, heterooligomer composed of large and small subunits.

It localises to the cytoplasm. It catalyses the reaction Exonucleolytic cleavage in either 5'- to 3'- or 3'- to 5'-direction to yield nucleoside 5'-phosphates.. In terms of biological role, bidirectionally degrades single-stranded DNA into large acid-insoluble oligonucleotides, which are then degraded further into small acid-soluble oligonucleotides. In Nitrobacter winogradskyi (strain ATCC 25391 / DSM 10237 / CIP 104748 / NCIMB 11846 / Nb-255), this protein is Exodeoxyribonuclease 7 small subunit.